The chain runs to 172 residues: Small ribosomal subunit protein uS5 (172 aa).

The 64-residue stretch at 17–80 (LREKMISVNR…EQARRNMFKV (64 aa)) folds into the S5 DRBM domain.

It belongs to the universal ribosomal protein uS5 family. In terms of assembly, part of the 30S ribosomal subunit. Contacts proteins S4 and S8.

Its function is as follows. With S4 and S12 plays an important role in translational accuracy. Functionally, located at the back of the 30S subunit body where it stabilizes the conformation of the head with respect to the body. The sequence is that of Small ribosomal subunit protein uS5 from Burkholderia thailandensis (strain ATCC 700388 / DSM 13276 / CCUG 48851 / CIP 106301 / E264).